The primary structure comprises 1116 residues: Surface layer protein (1116 aa).

The N-terminal stretch at 1-53 (MQDSGFKKKDRSTNIPQEQFVYTRGGEHKVMKKVVNSVLASALAITVAPMAFA) is a signal peptide. SLH domains follow at residues 54–117 (AEDT…KLAQ), 118–181 (FNTT…RGVW), and 182–231 (PNSM…YGTD).

The protein resides in the secreted. The protein localises to the cell wall. It localises to the S-layer. In Brevibacillus choshinensis, this protein is Surface layer protein.